Reading from the N-terminus, the 321-residue chain is Cytochrome c biogenesis protein CcsA (321 aa).

8 helical membrane passes run 9-29 (ILTHISFSIISVVITIQLMNL), 44-64 (GMIATFFSITGLLVTRWIYSG), 71-91 (LYESLIFLSWSFSIIHMVPYF), 98-118 (FSAITAPSAIFTQGFATSGLL), 143-163 (MLLSYAALLCGSLLSVALLVI), 225-245 (VISLGFIFLTIGILSGAVWAN), 252-272 (WNWDPKEIWAFITWAIFAIYL), and 286-306 (AIVASIGFLIIWICYFGVNLL).

The protein belongs to the CcmF/CycK/Ccl1/NrfE/CcsA family. As to quaternary structure, may interact with Ccs1.

The protein localises to the plastid. The protein resides in the chloroplast thylakoid membrane. Required during biogenesis of c-type cytochromes (cytochrome c6 and cytochrome f) at the step of heme attachment. The protein is Cytochrome c biogenesis protein CcsA of Acorus calamus var. americanus (American sweet flag).